The primary structure comprises 126 residues: Anti-adapter protein IraD (126 aa).

It belongs to the GpW/Gp25 family. IraD subfamily. In terms of assembly, interacts with RssB.

The protein resides in the cytoplasm. Its function is as follows. Inhibits RpoS proteolysis by regulating RssB activity, thereby increasing the stability of the sigma stress factor RpoS during oxidative stress. Its effect on RpoS stability is due to its interaction with RssB, which probably blocks the interaction of RssB with RpoS, and the consequent delivery of the RssB-RpoS complex to the ClpXP protein degradation pathway. This chain is Anti-adapter protein IraD, found in Salmonella enteritidis PT4 (strain P125109).